The primary structure comprises 1108 residues: Multidrug resistance regulator 1 (1108 aa).

Residues 1-19 (MSIATTPIETPKSPKSTEP) are compositionally biased toward polar residues. The disordered stretch occupies residues 1–27 (MSIATTPIETPKSPKSTEPQVRKRKKV). Positions 31–59 (CTNCRKRKIRCDRQHPCNNCIKSKKHNAC) form a DNA-binding region, zn(2)-C6 fungal-type. Residues 68 to 83 (PANFSTNGSSHGNTVP) are compositionally biased toward polar residues. Disordered stretches follow at residues 68–138 (PANF…SENE), 968–990 (DQTY…LDSR), and 1021–1064 (AQQQ…YYGN). Composition is skewed to basic and acidic residues over residues 86–104 (RPYE…EAPR) and 114–123 (NERKNSKKSP). Residues 124–138 (DNTVANNQQTASENE) show a composition bias toward polar residues. Residues 134-165 (ASENEVTITLSELNMLKQRLQNIEANINAQSN) are a coiled coil. Low complexity-rich tracts occupy residues 970–980 (TYSTSSESSST) and 1023–1041 (QQRQ…QSQS).

The protein resides in the nucleus. Transcription factor that acts as the central regulator of the MDR1 efflux pump. Other target genes include those encoding oxidoreductases, whose up-regulation in fluconazole-resistant isolates may help to prevent cell damage resulting from the generation of toxic molecules in the presence of fluconazole and thereby contribute to drug resistance. The sequence is that of Multidrug resistance regulator 1 from Candida albicans (strain SC5314 / ATCC MYA-2876) (Yeast).